Reading from the N-terminus, the 513-residue chain is ATP synthase subunit alpha (513 aa).

169 to 176 is an ATP binding site; it reads GDRQTGKT.

This sequence belongs to the ATPase alpha/beta chains family. In terms of assembly, F-type ATPases have 2 components, CF(1) - the catalytic core - and CF(0) - the membrane proton channel. CF(1) has five subunits: alpha(3), beta(3), gamma(1), delta(1), epsilon(1). CF(0) has three main subunits: a(1), b(2) and c(9-12). The alpha and beta chains form an alternating ring which encloses part of the gamma chain. CF(1) is attached to CF(0) by a central stalk formed by the gamma and epsilon chains, while a peripheral stalk is formed by the delta and b chains.

Its subcellular location is the cell inner membrane. It catalyses the reaction ATP + H2O + 4 H(+)(in) = ADP + phosphate + 5 H(+)(out). Produces ATP from ADP in the presence of a proton gradient across the membrane. The alpha chain is a regulatory subunit. In Halorhodospira halophila (strain DSM 244 / SL1) (Ectothiorhodospira halophila (strain DSM 244 / SL1)), this protein is ATP synthase subunit alpha.